Consider the following 166-residue polypeptide: Urocortin-3 (166 aa).

Residues 1–23 (MLVPAPFLLVLLLLLGAPQVGLS) form the signal peptide. Residues 24–123 (QRSPKAGSSP…QDKAKSDRRT (100 aa)) constitute a propeptide that is removed on maturation. Residues 41–51 (REAEKSQRKDT) are compositionally biased toward basic and acidic residues. Positions 41 to 123 (REAEKSQRKD…QDKAKSDRRT (83 aa)) are disordered. The span at 68-77 (EDQEGQEEED) shows a compositional bias: acidic residues. Residues 86–96 (SVGGGGGGGAG) are compositionally biased toward gly residues. Basic and acidic residues predominate over residues 113-123 (SQDKAKSDRRT). At I162 the chain carries Isoleucine amide.

It belongs to the sauvagine/corticotropin-releasing factor/urotensin I family. In terms of assembly, binds with high affinity to CRF receptors 2-alpha and 2-beta.

The protein resides in the secreted. Suppresses food intake, delays gastric emptying and decreases heat-induced edema. Might represent an endogenous ligand for maintaining homeostasis after stress. The chain is Urocortin-3 (UCN3) from Bos taurus (Bovine).